The chain runs to 310 residues: Acetyl-coenzyme A carboxylase carboxyl transferase subunit beta (310 aa).

One can recognise a CoA carboxyltransferase N-terminal domain in the interval 27-296 (LWRKCPNCEA…QDRDAEPDDT (270 aa)). Zn(2+) contacts are provided by C31, C34, C50, and C53. Residues 31 to 53 (CPNCEAVLYLPELERHQSVCPKC) form a C4-type zinc finger. The segment at 282 to 310 (THQPHQDRDAEPDDTASQSTLDEFSQADH) is disordered.

It belongs to the AccD/PCCB family. In terms of assembly, acetyl-CoA carboxylase is a heterohexamer composed of biotin carboxyl carrier protein (AccB), biotin carboxylase (AccC) and two subunits each of ACCase subunit alpha (AccA) and ACCase subunit beta (AccD). Zn(2+) serves as cofactor.

It is found in the cytoplasm. It carries out the reaction N(6)-carboxybiotinyl-L-lysyl-[protein] + acetyl-CoA = N(6)-biotinyl-L-lysyl-[protein] + malonyl-CoA. The protein operates within lipid metabolism; malonyl-CoA biosynthesis; malonyl-CoA from acetyl-CoA: step 1/1. Functionally, component of the acetyl coenzyme A carboxylase (ACC) complex. Biotin carboxylase (BC) catalyzes the carboxylation of biotin on its carrier protein (BCCP) and then the CO(2) group is transferred by the transcarboxylase to acetyl-CoA to form malonyl-CoA. This chain is Acetyl-coenzyme A carboxylase carboxyl transferase subunit beta, found in Chromohalobacter salexigens (strain ATCC BAA-138 / DSM 3043 / CIP 106854 / NCIMB 13768 / 1H11).